The following is a 560-amino-acid chain: NRAMP-like transporter smf-3 (560 aa).

At 1–43 (MEGEMKCPIEEIREKPEMRKAQQTYEVQVEVEDTPDTTFSWRK) the chain is on the cytoplasmic side. A helical membrane pass occupies residues 44 to 64 (LWAFTGPGFLMSIAYLDPGNI). The Extracellular segment spans residues 65–71 (ESDLQAG). Residues 72-92 (AISYFKLIWVLLVAHIMGLLL) traverse the membrane as a helical segment. At 93–120 (QRLAARLGVVSGKHMAEIAFSYYPKIPR) the chain is on the cytoplasmic side. A helical membrane pass occupies residues 121–141 (LVLWMLVESAIVGSDMQEVIG). At 142–152 (TAISFYLLSNG) the chain is on the extracellular side. Residues 153 to 173 (VIPLWAGVLITICDTFTFLFL) form a helical membrane-spanning segment. Residues 174 to 182 (EKYGVRKFE) are Cytoplasmic-facing. The helical transmembrane segment at 183 to 203 (AFFCFLITCMAITFGYEFGVS) threads the bilayer. Residues 204–229 (APDAGKMFSGMFVPWCNGCDNNMVMQ) are Extracellular-facing. Residues 230 to 250 (GVAIIGAVIMPHNFYLHSALV) form a helical membrane-spanning segment. Topologically, residues 251 to 268 (KSRRVDRRRAEKVTEANK) are cytoplasmic. A helical membrane pass occupies residues 269-289 (YFFIESAFALFVSFIINTLVI). Over 290-339 (SVFAQGMYGKTNQDIRDTCYNNTHNGMPDFYKVEFPANNDAAQSDIYHAG) the chain is Extracellular. An N-linked (GlcNAc...) asparagine glycan is attached at Asn310. A helical membrane pass occupies residues 340 to 360 (IFLGCTFGIFALYVWAVGILA). The Cytoplasmic portion of the chain corresponds to 361-390 (AGQSSTMTGTYAGQFAMEGFIQIKLPQWKR). Residues 391–411 (ILITRSLAILPTLAVVIFSGG) traverse the membrane as a helical segment. Residues 412 to 420 (IDNISSLND) are Extracellular-facing. N-linked (GlcNAc...) asparagine glycosylation occurs at Asn414. Residues 421–441 (FLNCLQLIQLPFALIPVLTFV) traverse the membrane as a helical segment. The Cytoplasmic portion of the chain corresponds to 442–458 (SDRNIMHEYKLASVSKV). A helical membrane pass occupies residues 459-479 (VSIVISLIILFINFYFLYSWI). The Extracellular portion of the chain corresponds to 480 to 486 (GSTFGYN). The helical transmembrane segment at 487 to 507 (AVSIPITIFCAIFYIIFIAYL) threads the bilayer. The Cytoplasmic portion of the chain corresponds to 508-560 (TYYCLVAMEFISPIQTKWLAEPIYHDFDAPWLEDSENPSTKNTISDDELSMRY).

The protein belongs to the NRAMP family. In terms of tissue distribution, expressed in dopaminergic neurons (at protein level). Expressed in intestine with a weaker expression in the most proximal and distal regions. Weakly expressed in the hyp1-6, hyp7 and hyp8-12 hypodermis and in head and tail neurons.

The protein localises to the apical cell membrane. The protein resides in the cytoplasmic vesicle membrane. Its function is as follows. Probable divalent metal ion transporter which regulates the uptake of several heavy metals such as Mn(2+), Al(3+) and iron. Plays a role in modulating Al(3+)-induced dopamine (DA) neuron degeneration through the intracellular sequestration of Al(3+). This chain is NRAMP-like transporter smf-3, found in Caenorhabditis elegans.